We begin with the raw amino-acid sequence, 291 residues long: Dihydroorotate dehydrogenase B (NAD(+)), catalytic subunit (291 aa).

Residues serine 17 and 42–43 contribute to the FMN site; that span reads KT. Substrate is bound by residues lysine 42, 67–71, and asparagine 118; that span reads NAIGL. Asparagine 118 serves as a coordination point for FMN. The active-site Nucleophile is the serine 121. Residues lysine 153 and isoleucine 178 each contribute to the FMN site. 179–180 provides a ligand contact to substrate; that stretch reads NT. FMN contacts are provided by residues glycine 204, 230 to 231, and 252 to 253; these read GG and GT.

Belongs to the dihydroorotate dehydrogenase family. Type 1 subfamily. In terms of assembly, heterotetramer of 2 PyrK and 2 PyrD type B subunits. FMN serves as cofactor.

The protein localises to the cytoplasm. It carries out the reaction (S)-dihydroorotate + NAD(+) = orotate + NADH + H(+). It functions in the pathway pyrimidine metabolism; UMP biosynthesis via de novo pathway; orotate from (S)-dihydroorotate (NAD(+) route): step 1/1. Functionally, catalyzes the conversion of dihydroorotate to orotate with NAD(+) as electron acceptor. This Sulfolobus acidocaldarius (strain ATCC 33909 / DSM 639 / JCM 8929 / NBRC 15157 / NCIMB 11770) protein is Dihydroorotate dehydrogenase B (NAD(+)), catalytic subunit (pyrD).